A 261-amino-acid polypeptide reads, in one-letter code: Imidazole glycerol phosphate synthase subunit HisF (261 aa).

Residues D16 and D135 contribute to the active site.

It belongs to the HisA/HisF family. In terms of assembly, heterodimer of HisH and HisF.

The protein resides in the cytoplasm. The enzyme catalyses 5-[(5-phospho-1-deoxy-D-ribulos-1-ylimino)methylamino]-1-(5-phospho-beta-D-ribosyl)imidazole-4-carboxamide + L-glutamine = D-erythro-1-(imidazol-4-yl)glycerol 3-phosphate + 5-amino-1-(5-phospho-beta-D-ribosyl)imidazole-4-carboxamide + L-glutamate + H(+). The protein operates within amino-acid biosynthesis; L-histidine biosynthesis; L-histidine from 5-phospho-alpha-D-ribose 1-diphosphate: step 5/9. IGPS catalyzes the conversion of PRFAR and glutamine to IGP, AICAR and glutamate. The HisF subunit catalyzes the cyclization activity that produces IGP and AICAR from PRFAR using the ammonia provided by the HisH subunit. The sequence is that of Imidazole glycerol phosphate synthase subunit HisF from Mycobacterium sp. (strain JLS).